The following is a 220-amino-acid chain: MYKEGACLYRNPLRSKSDVKDWRMEGGGQISFDDHSLHLSHVQDEAHFVFWCPETFPDGIIVTWDFSPIEQPGLCMLFFAAAGIRGEDLFDPSLRKRTGTYPEYHSGDINALHLSYFRRKYAEERAFRTCNLRKSRGFHLAAMGADPLPSPDDADSPYRMKLIKDKGYVHFSINGLPILEWMDDGSTYGPVLTKGKIGFRQMAPMKAVYRDFAVHQAVRR.

This is an uncharacterized protein from Bacillus subtilis (strain 168).